The chain runs to 731 residues: Cucumisin (731 aa).

A signal peptide spans 1–22 (MSSSLIFKLFFFSLFFSNRLAS). Positions 23-110 (RLDSDDDGKN…VFLNEMNELH (88 aa)) are cleaved as a propeptide — activation peptide. The 77-residue stretch at 34-110 (YIVYMGRKLE…VFLNEMNELH (77 aa)) folds into the Inhibitor I9 domain. The 471-residue stretch at 114 to 584 (SWDFLGFPLT…SGHVNPLKAV (471 aa)) folds into the Peptidase S8 domain. Catalysis depends on Asp140, which acts as the Charge relay system. Cys166 and Cys174 are disulfide-bonded. The active-site Charge relay system is His204. Disulfide bonds link Cys245/Cys250 and Cys380/Cys397. Residue Asn466 is glycosylated (N-linked (GlcNAc...) asparagine). Catalysis depends on Ser525, which acts as the Charge relay system. Positions 616–731 (GDYSACTSGN…RSPITITSLV (116 aa)) are excised as a propeptide. Asn652 carries an N-linked (GlcNAc...) asparagine glycan.

It belongs to the peptidase S8 family. In terms of assembly, monomer and dimer. The C-terminal propeptide is autocleaved. As to expression, specifically expressed in fruits. Expressed in sarcocarp (at protein level).

It is found in the secreted. The enzyme catalyses Hydrolysis of proteins with broad specificity.. This is Cucumisin from Cucumis melo (Muskmelon).